The following is a 482-amino-acid chain: MMEMVLPVANATAAALARVSAVFNAPLARAVVFGIHIDGHLVVEGLLIAAILFQLSRKSYKPPKKPLTEREVDELCDDWQPEPLCPPIKEGARIDTPTLESAAGPHTTVDGKEVVNFASANYLGLIGNEKIIDSCVGSVEKYGVGSCGPRSFYGTIDVHLDCESKIANFLGTQDSILYSYGISTIFSVIPAFCKKGDIIVADEGVHWAVQNGLQLSRSTVVYFKHNDMASLASILEKLTHGNKHTEKIRRYIVVEAIYQNSGQIAPLDEIVRLKEKYRFRVILEESHSFGVLGKSGRGLAEHYGVPVEKIDIITAGMGNALATDGGFCTGSVRVVDHQRLSSSGYVFSASLPPYLASAAMSAVNHLEENPSVLANLRSNIALLHKELSDIPGLEIASNILSPIVFLKLKTPTGSAVADLELLEIIAEKVLMEDSVFIAATKRSSLDKCRLPVGIRLFVSAGHTESDIFKVSASLKRVAASVV.

A helical transmembrane segment spans residues 33–53 (FGIHIDGHLVVEGLLIAAILF).

Belongs to the class-II pyridoxal-phosphate-dependent aminotransferase family. In terms of assembly, heterodimer with LCB2. Component of the serine palmitoyltransferase (SPT) complex, composed of LCB1 and LCB2. Pyridoxal 5'-phosphate is required as a cofactor.

The protein localises to the endoplasmic reticulum membrane. The enzyme catalyses L-serine + hexadecanoyl-CoA + H(+) = 3-oxosphinganine + CO2 + CoA. Its pathway is lipid metabolism; sphingolipid metabolism. Functionally, serine palmitoyltransferase (SPT). The heterodimer formed with LCB2 constitutes the catalytic core. In Oryza sativa subsp. japonica (Rice), this protein is Long chain base biosynthesis protein 1c.